A 2742-amino-acid chain; its full sequence is Polycystin-1-like protein 1 (2742 aa).

At Met1 to Asp1602 the chain is on the extracellular side. N-linked (GlcNAc...) asparagine glycosylation is found at Asn35, Asn133, Asn149, Asn220, and Asn267. 2 consecutive PKD domains span residues Ala286 to Asn372 and Lys370 to Pro454. 7 N-linked (GlcNAc...) asparagine glycosylation sites follow: Asn383, Asn397, Asn486, Asn545, Asn693, Asn709, and Asn735. One can recognise an REJ domain in the interval Cys452 to Ile1338. Disordered regions lie at residues Ser767–Pro829 and Asp846–Val908. A compositionally biased stretch (polar residues) spans Ser779–Phe799. The span at Ser880–Ser893 shows a compositional bias: low complexity. Residues Asn1080, Asn1101, Asn1201, Asn1318, Asn1437, Asn1490, and Asn1568 are each glycosylated (N-linked (GlcNAc...) asparagine). The GAIN-B domain occupies His1436–Ser1587. 2 disulfides stabilise this stretch: Cys1541-Cys1569 and Cys1556-Cys1571. The GPS stretch occupies residues Cys1541–Ser1587. The chain crosses the membrane as a helical span at residues Leu1603–Cys1623. Topologically, residues Lys1624–Arg1812 are cytoplasmic. The region spanning His1648 to Arg1769 is the PLAT domain. A helical membrane pass occupies residues Leu1813–Gln1833. Topologically, residues Arg1834–Ser1851 are extracellular. Residues Ile1852 to Leu1872 form a helical membrane-spanning segment. The Cytoplasmic segment spans residues Phe1873 to Cys2005. Residues Val2006–Gly2026 form a helical membrane-spanning segment. The Extracellular segment spans residues Thr2027–Ser2040. A helical transmembrane segment spans residues Leu2041–Ala2061. Residues Ala2062–Arg2151 are Cytoplasmic-facing. The helical transmembrane segment at Asp2152 to Val2172 threads the bilayer. Residues Asp2173 to Ser2344 lie on the Extracellular side of the membrane. Asn2218 is a glycosylation site (N-linked (GlcNAc...) asparagine). The chain crosses the membrane as a helical span at residues Met2345–Leu2365. At Tyr2366 to Met2378 the chain is on the cytoplasmic side. Residues Gly2379–Val2401 form a helical membrane-spanning segment. The Extracellular portion of the chain corresponds to His2402–Gly2442. A helical membrane pass occupies residues Ile2443–Ala2463. Residues Pro2464 to Pro2467 lie on the Cytoplasmic side of the membrane. A helical transmembrane segment spans residues Leu2468–Phe2488. Topologically, residues Ser2489–Tyr2528 are extracellular. A helical transmembrane segment spans residues Tyr2529 to Ile2549. Residues Arg2550–Asn2742 are Cytoplasmic-facing.

Belongs to the polycystin family. As to quaternary structure, heterodimer. Interacts with pkd2 to form a calcium channel. Interacts with pkd2l1 to form ciliary calcium channel. As to expression, expressed in Kupffer's vesicle, an organ equivalent to the node.

It is found in the cell projection. Its subcellular location is the cilium membrane. Component of a calcium-permeant ion channel formed by PKD1L2 and PKD1L1 in primary cilia, where it controls cilium calcium concentration, without affecting cytoplasmic calcium concentration, and regulates sonic hedgehog/SHH signaling and GLI2 transcription. The PKD1L1:PKD2L1 channel complex is mechanosensitive only at high pressures and is highly temperature sensitive. Also involved in left/right axis specification downstream of nodal flow by forming a complex with PKD2 in cilia to facilitate flow detection in left/right patterning. The protein is Polycystin-1-like protein 1 of Oryzias latipes (Japanese rice fish).